The sequence spans 201 residues: uncharacterized protein (201 aa).

The interval 121–141 (HHRTRPGRGPGPRPGGSAMAG) is disordered.

This is an uncharacterized protein from Mycobacterium tuberculosis (strain ATCC 25618 / H37Rv).